A 287-amino-acid polypeptide reads, in one-letter code: NAD kinase (287 aa).

The Proton acceptor role is filled by Asp66. NAD(+) contacts are provided by residues Asp66–Gly67, Asn137–Asp138, Arg148, Arg165, Asp167, and Thr178–Ser183.

The protein belongs to the NAD kinase family. A divalent metal cation is required as a cofactor.

It localises to the cytoplasm. The enzyme catalyses NAD(+) + ATP = ADP + NADP(+) + H(+). In terms of biological role, involved in the regulation of the intracellular balance of NAD and NADP, and is a key enzyme in the biosynthesis of NADP. Catalyzes specifically the phosphorylation on 2'-hydroxyl of the adenosine moiety of NAD to yield NADP. This is NAD kinase from Chlorobium limicola (strain DSM 245 / NBRC 103803 / 6330).